The chain runs to 427 residues: Glutamate-1-semialdehyde 2,1-aminomutase (427 aa).

Residue Lys265 is modified to N6-(pyridoxal phosphate)lysine.

This sequence belongs to the class-III pyridoxal-phosphate-dependent aminotransferase family. HemL subfamily. In terms of assembly, homodimer. The cofactor is pyridoxal 5'-phosphate.

The protein localises to the cytoplasm. It carries out the reaction (S)-4-amino-5-oxopentanoate = 5-aminolevulinate. It participates in porphyrin-containing compound metabolism; protoporphyrin-IX biosynthesis; 5-aminolevulinate from L-glutamyl-tRNA(Glu): step 2/2. This is Glutamate-1-semialdehyde 2,1-aminomutase from Burkholderia cenocepacia (strain HI2424).